A 620-amino-acid chain; its full sequence is 1-deoxy-D-xylulose-5-phosphate synthase (620 aa).

Thiamine diphosphate contacts are provided by residues His80 and 121 to 123 (GHS). Asp152 contributes to the Mg(2+) binding site. Thiamine diphosphate-binding positions include 153 to 154 (GA), Asn181, Tyr288, and Glu370. Asn181 is a binding site for Mg(2+).

The protein belongs to the transketolase family. DXPS subfamily. As to quaternary structure, homodimer. It depends on Mg(2+) as a cofactor. Requires thiamine diphosphate as cofactor.

It catalyses the reaction D-glyceraldehyde 3-phosphate + pyruvate + H(+) = 1-deoxy-D-xylulose 5-phosphate + CO2. It functions in the pathway metabolic intermediate biosynthesis; 1-deoxy-D-xylulose 5-phosphate biosynthesis; 1-deoxy-D-xylulose 5-phosphate from D-glyceraldehyde 3-phosphate and pyruvate: step 1/1. Its function is as follows. Catalyzes the acyloin condensation reaction between C atoms 2 and 3 of pyruvate and glyceraldehyde 3-phosphate to yield 1-deoxy-D-xylulose-5-phosphate (DXP). The chain is 1-deoxy-D-xylulose-5-phosphate synthase from Klebsiella pneumoniae (strain 342).